A 154-amino-acid polypeptide reads, in one-letter code: SsrA-binding protein (154 aa).

It belongs to the SmpB family.

It localises to the cytoplasm. Required for rescue of stalled ribosomes mediated by trans-translation. Binds to transfer-messenger RNA (tmRNA), required for stable association of tmRNA with ribosomes. tmRNA and SmpB together mimic tRNA shape, replacing the anticodon stem-loop with SmpB. tmRNA is encoded by the ssrA gene; the 2 termini fold to resemble tRNA(Ala) and it encodes a 'tag peptide', a short internal open reading frame. During trans-translation Ala-aminoacylated tmRNA acts like a tRNA, entering the A-site of stalled ribosomes, displacing the stalled mRNA. The ribosome then switches to translate the ORF on the tmRNA; the nascent peptide is terminated with the 'tag peptide' encoded by the tmRNA and targeted for degradation. The ribosome is freed to recommence translation, which seems to be the essential function of trans-translation. The protein is SsrA-binding protein of Synechocystis sp. (strain ATCC 27184 / PCC 6803 / Kazusa).